Consider the following 476-residue polypeptide: Ubiquitin-conjugating enzyme E2 variant 3 (476 aa).

In terms of domain architecture, UEV spans 2 to 145 (EFSAETLRQQ…EEELPLYSLS (144 aa)). NAD(+) is bound at residue 185-213 (GDMALACLLAVSAKGTAGKLLLLDPTDGE).

This sequence in the N-terminal section; belongs to the ubiquitin-conjugating enzyme family. UEV subfamily. It in the C-terminal section; belongs to the LDH/MDH superfamily. Homodimer.

In terms of biological role, possible negative regulator of polyubiquitination. This is Ubiquitin-conjugating enzyme E2 variant 3 (uevld) from Xenopus tropicalis (Western clawed frog).